A 189-amino-acid polypeptide reads, in one-letter code: MERSHLYLPTLSYAAMGHVYAPYRGSSSPALSTASSTSSKPEQIEELVSQQLHHLKMHYADEEQRYVDQMLLENPIVVERRAPPPLKTELAMDCRGSGSGSGSGSGSDVKDAQRQRAESCRKSRYNNKIKKAKLRFRHKFVSGQLKKSAVMLDTMRDVIAQAERQLLERGYPAATLERMRATFGLEMEQ.

A disordered region spans residues 93–124; it reads DCRGSGSGSGSGSGSDVKDAQRQRAESCRKSR. The segment covering 108–121 has biased composition (basic and acidic residues); that stretch reads DVKDAQRQRAESCR.

Homodimer. Interacts with dpn (via bHLH motif). Interacts with da (via bHLH motif). Interacts with Bap60. As to expression, localizes to all the embryonic nuclei until nuclear cycle 9, when expression ceases in the prepole cell nuclei. Associates with the somatic nuclei through cycle 10. By nuclear cycle 12, distributes uniformly in the somatic portion of the embryo and no longer associates with the nuclei. After early cycle 14 (beginning of cellularization) there is very little or no expression in the periphery of the embryo or in either the somatic or germ cells. In the yolk, accumulates at the nuclei from nuclear cycle 8 until 10-11 hours after fertilization.

The protein resides in the nucleus. Its function is as follows. Involved in sex determination and dosage compensation. Required for proper expression of Sxl in embryonic somatic cells. Also has an essential function in the yolk nuclei. Involved in endoderm migration and midgut formation. The polypeptide is Protein sisterless A (sisA) (Drosophila melanogaster (Fruit fly)).